Consider the following 99-residue polypeptide: Large ribosomal subunit protein bL27 (99 aa).

Positions 1–10 (MKLIFDIQLF) are excised as a propeptide.

It belongs to the bacterial ribosomal protein bL27 family. In terms of processing, the N-terminus is cleaved by ribosomal processing cysteine protease Prp.

This Caldicellulosiruptor bescii (strain ATCC BAA-1888 / DSM 6725 / KCTC 15123 / Z-1320) (Anaerocellum thermophilum) protein is Large ribosomal subunit protein bL27.